Here is a 460-residue protein sequence, read N- to C-terminus: Cysteine proteinase 7 (460 aa).

The first 17 residues, 1 to 17, serve as a signal peptide directing secretion; that stretch reads MKVLSALCVLLVSVATA. Residues 18-111 constitute a propeptide, activation peptide; the sequence is KQQLSEVEYR…TESDKIFDAS (94 aa). Disulfide bonds link cysteine 131–cysteine 176 and cysteine 167–cysteine 210. Residue cysteine 134 is part of the active site. N-linked (GlcNAc...) asparagine glycosylation is found at asparagine 226 and asparagine 252. Cysteines 268 and 445 form a disulfide. Histidine 275 is an active-site residue. A disordered region spans residues 285-409; it reads GSGSSGSHGG…GSSSGSNSNG (125 aa). Residues 294 to 359 show a composition bias toward low complexity; the sequence is GSQSQSAGSD…QSGSQSGNSG (66 aa). A compositionally biased stretch (gly residues) spans 367–385; that stretch reads AGSGSGSGSGSGSGSGSGS. The span at 386-409 shows a compositional bias: low complexity; sequence VSGSASGSASGSASGSSSGSNSNG. Residue asparagine 423 is part of the active site.

The protein belongs to the peptidase C1 family. In terms of processing, glycosylated; contains GlcNAc-alpha-1-P-Ser residues. Also N-glycosylated.

It is found in the lysosome. In Dictyostelium discoideum (Social amoeba), this protein is Cysteine proteinase 7 (cprG).